The primary structure comprises 349 residues: S-adenosylmethionine:tRNA ribosyltransferase-isomerase (349 aa).

The protein belongs to the QueA family. As to quaternary structure, monomer.

Its subcellular location is the cytoplasm. It carries out the reaction 7-aminomethyl-7-carbaguanosine(34) in tRNA + S-adenosyl-L-methionine = epoxyqueuosine(34) in tRNA + adenine + L-methionine + 2 H(+). Its pathway is tRNA modification; tRNA-queuosine biosynthesis. In terms of biological role, transfers and isomerizes the ribose moiety from AdoMet to the 7-aminomethyl group of 7-deazaguanine (preQ1-tRNA) to give epoxyqueuosine (oQ-tRNA). The polypeptide is S-adenosylmethionine:tRNA ribosyltransferase-isomerase (Pseudomonas putida (strain W619)).